We begin with the raw amino-acid sequence, 226 residues long: ATP synthase F(0) complex subunit a (226 aa).

A run of 6 helical transmembrane segments spans residues 12-32 (PTIL…LLIP), 68-88 (WSLM…LGLL), 97-117 (QLSM…ATGF), 138-158 (IPML…ALAV), 164-184 (ITAG…LSTI), and 200-222 (TTLE…SLYL).

Belongs to the ATPase A chain family. Component of the ATP synthase complex composed at least of ATP5F1A/subunit alpha, ATP5F1B/subunit beta, ATP5MC1/subunit c (homooctomer), MT-ATP6/subunit a, MT-ATP8/subunit 8, ATP5ME/subunit e, ATP5MF/subunit f, ATP5MG/subunit g, ATP5MK/subunit k, ATP5MJ/subunit j, ATP5F1C/subunit gamma, ATP5F1D/subunit delta, ATP5F1E/subunit epsilon, ATP5PF/subunit F6, ATP5PB/subunit b, ATP5PD/subunit d, ATP5PO/subunit OSCP. ATP synthase complex consists of a soluble F(1) head domain (subunits alpha(3) and beta(3)) - the catalytic core - and a membrane F(0) domain - the membrane proton channel (subunits c, a, 8, e, f, g, k and j). These two domains are linked by a central stalk (subunits gamma, delta, and epsilon) rotating inside the F1 region and a stationary peripheral stalk (subunits F6, b, d, and OSCP). Interacts with DNAJC30; interaction is direct.

The protein resides in the mitochondrion inner membrane. The catalysed reaction is H(+)(in) = H(+)(out). Functionally, subunit a, of the mitochondrial membrane ATP synthase complex (F(1)F(0) ATP synthase or Complex V) that produces ATP from ADP in the presence of a proton gradient across the membrane which is generated by electron transport complexes of the respiratory chain. ATP synthase complex consist of a soluble F(1) head domain - the catalytic core - and a membrane F(1) domain - the membrane proton channel. These two domains are linked by a central stalk rotating inside the F(1) region and a stationary peripheral stalk. During catalysis, ATP synthesis in the catalytic domain of F(1) is coupled via a rotary mechanism of the central stalk subunits to proton translocation. With the subunit c (ATP5MC1), forms the proton-conducting channel in the F(0) domain, that contains two crucial half-channels (inlet and outlet) that facilitate proton movement from the mitochondrial intermembrane space (IMS) into the matrix. Protons are taken up via the inlet half-channel and released through the outlet half-channel, following a Grotthuss mechanism. The sequence is that of ATP synthase F(0) complex subunit a from Hylobates lar (Lar gibbon).